The chain runs to 137 residues: MTGAASQQQTETPLYGERAIDEAELICFDNPRPGRAYEVSIELPEFTCKCPFSGYPDFAVLRLIYQPGPRVVELKAIKLYVNSYRDRSISHEEVSNRIVDDLVAACDPVWLQLEADFNPRGNVHTVVRVSHGTRQPC.

C50 serves as the catalytic Thioimide intermediate. Catalysis depends on D57, which acts as the Proton donor. Substrate-binding positions include 72-74 (VEL) and 91-92 (HE).

The protein belongs to the GTP cyclohydrolase I family. QueF type 1 subfamily.

The protein localises to the cytoplasm. The enzyme catalyses 7-aminomethyl-7-carbaguanine + 2 NADP(+) = 7-cyano-7-deazaguanine + 2 NADPH + 3 H(+). The protein operates within tRNA modification; tRNA-queuosine biosynthesis. In terms of biological role, catalyzes the NADPH-dependent reduction of 7-cyano-7-deazaguanine (preQ0) to 7-aminomethyl-7-deazaguanine (preQ1). The protein is NADPH-dependent 7-cyano-7-deazaguanine reductase of Synechococcus sp. (strain CC9902).